We begin with the raw amino-acid sequence, 136 residues long: MIYMDTSALTKLLISEPETTELRTWLTAQSGQGEDAATSTLGRVELMRVVARYGQPGQTERARYLLDGLDILPLTEPVIGLAETIGPATLRSLDAIHLAAAAQIKRELTAFVTYDHRLLSGCREVGFVTASPGAVR.

Residues 2-104 (IYMDTSALTK…AIHLAAAAQI (103 aa)) enclose the PINc domain. Residues D5 and D94 each contribute to the Mg(2+) site.

It belongs to the PINc/VapC protein family. Mg(2+) is required as a cofactor.

Toxic component of a type II toxin-antitoxin (TA) system. An RNase. Its toxic effect on colony formation is neutralized by coexpression with cognate antitoxin VapB47. This is Ribonuclease VapC47 from Mycobacterium tuberculosis (strain CDC 1551 / Oshkosh).